The chain runs to 377 residues: DNA replication and repair protein RecF (377 aa).

30 to 37 (GPNGQGKT) contacts ATP.

It belongs to the RecF family.

Its subcellular location is the cytoplasm. In terms of biological role, the RecF protein is involved in DNA metabolism; it is required for DNA replication and normal SOS inducibility. RecF binds preferentially to single-stranded, linear DNA. It also seems to bind ATP. This is DNA replication and repair protein RecF from Thermobifida fusca (strain YX).